Reading from the N-terminus, the 224-residue chain is Tumor protein D52 (224 aa).

The disordered stretch occupies residues 29-53; it reads LSPSGNTSPPGSPTQNVGLLKTEPV. T35 carries the post-translational modification Phosphothreonine. 2 positions are modified to phosphoserine: S36 and S40. The stretch at 61–113 forms a coiled coil; sequence VTMLSAPEALTEEEQEELRRELTKVEEEIQTLSQVLAAKEKHLAELKRKLGIS. Phosphoserine occurs at positions 138, 175, and 223. The disordered stretch occupies residues 186-224; that stretch reads KVGGAKPAGGDFGEVLNSTANATSTMTTEPPPEQMTESP. Positions 202 to 224 are enriched in low complexity; that stretch reads NSTANATSTMTTEPPPEQMTESP.

Belongs to the TPD52 family. In terms of assembly, forms a homodimer or heterodimer with other members of the family. In terms of tissue distribution, isoform 2 is expressed at higher levels in kidney and brain than in liver, lung, testis and heart. Within the brain, isoform 2 is highly expressed in the granular layer of the cerebellum, the cortex and the hippocampus. In embryos, isoform 2 is expressed in the epithelium of the developing intestine, stomach, olfactory epithelium, neuronal layers of the retina, salivary gland, kidney and dorsal root ganglion.

This chain is Tumor protein D52 (Tpd52), found in Mus musculus (Mouse).